The sequence spans 563 residues: Kelch repeat and BTB domain-containing protein 1 (563 aa).

Residues 21–88 (CDINIVINDE…IYGIPLSLTN (68 aa)) form the BTB domain. The 97-residue stretch at 123–219 (CIDFYIYADK…SLLSPQVIKS (97 aa)) folds into the BACK domain. Kelch repeat units lie at residues 252-297 (IELI…VMDN), 298-346 (IIYM…VDDE), 347-395 (YIYC…MLNG), 397-441 (IYVI…VHAG), 442-492 (KIYI…SVHN), and 494-540 (LYVG…PIKH).

As to quaternary structure, interacts (via BTB domain) with host CUL3.

The protein resides in the host cytoplasm. Probable substrate-specific adapter of CUL3-containing E3 ubiquitin-protein ligases which mediate the ubiquitination and subsequent proteasomal degradation of host target proteins. The polypeptide is Kelch repeat and BTB domain-containing protein 1 (KBTB1) (Mus musculus (Mouse)).